The primary structure comprises 688 residues: Envelope glycoprotein gp70 (688 aa).

A compositionally biased stretch (polar residues) spans 1–15 (MPNHQSGSPTGSSDL). Residues 1–31 (MPNHQSGSPTGSSDLLLSGKKQRPHLALRRK) are disordered. A signal peptide spans 1 to 98 (MPNHQSGSPT…SVLGPPPVTG (98 aa)). The span at 20–31 (KKQRPHLALRRK) shows a compositional bias: basic residues. Over 99–624 (ESYWAYLPKP…ALNPLDWTQY (526 aa)) the chain is Extracellular. 2 N-linked (GlcNAc...) asparagine; by host glycosylation sites follow: N127 and N143. A coiled-coil region spans residues 426 to 474 (LLPVDIGDEPWFDDSAIQTFRYATDLIRAKRFVAAIILGISALIAIITS). Positions 455–456 (KR) are excised as a propeptide. The segment at 457 to 477 (FVAAIILGISALIAIITSFAV) is fusion peptide. The interval 463-481 (LGISALIAIITSFAVATTA) is immunosuppression. N-linked (GlcNAc...) asparagine; by host glycosylation occurs at N498. The stretch at 511–541 (LKLEARLNALEEVVLELGQDVANLKTRMSTR) forms a coiled coil. Residue N557 is glycosylated (N-linked (GlcNAc...) asparagine; by host). A helical transmembrane segment spans residues 625 to 645 (FIFIGVGALLLVIVLMIFPIV). Topologically, residues 646 to 688 (FQCLAKSLDQVQSDLNVLLLKKKKGGNAAPAAEMVELPRVSYT) are cytoplasmic.

In terms of assembly, the mature envelope protein (Env) consists of a trimer of SU-TM heterodimers attached by noncovalent interactions or by a labile interchain disulfide bond. In terms of processing, specific enzymatic cleavages in vivo yield mature proteins. Envelope glycoproteins are synthesized as an inactive precursor that is N-glycosylated and processed likely by host cell furin or by a furin-like protease in the Golgi to yield the mature SU and TM proteins. The cleavage site between SU and TM requires the minimal sequence [KR]-X-[KR]-R.

It localises to the virion membrane. Its subcellular location is the host cell membrane. Functionally, the surface protein (SU) attaches the virus to the host cell by binding to its receptor. This interaction triggers the refolding of the transmembrane protein (TM) and is thought to activate its fusogenic potential by unmasking its fusion peptide. Fusion occurs at the host cell plasma membrane. Its function is as follows. The transmembrane protein (TM) acts as a class I viral fusion protein. Under the current model, the protein has at least 3 conformational states: pre-fusion native state, pre-hairpin intermediate state, and post-fusion hairpin state. During viral and target cell membrane fusion, the coiled coil regions (heptad repeats) assume a trimer-of-hairpins structure, positioning the fusion peptide in close proximity to the C-terminal region of the ectodomain. The formation of this structure appears to drive apposition and subsequent fusion of viral and target cell membranes. Membranes fusion leads to delivery of the nucleocapsid into the cytoplasm. The protein is Envelope glycoprotein gp70 (env) of Mus musculus (Mouse).